A 459-amino-acid polypeptide reads, in one-letter code: UDP-N-acetylmuramate--L-alanine ligase (459 aa).

118–124 lines the ATP pocket; sequence GTHGKTT.

This sequence belongs to the MurCDEF family.

Its subcellular location is the cytoplasm. It catalyses the reaction UDP-N-acetyl-alpha-D-muramate + L-alanine + ATP = UDP-N-acetyl-alpha-D-muramoyl-L-alanine + ADP + phosphate + H(+). The protein operates within cell wall biogenesis; peptidoglycan biosynthesis. Its function is as follows. Cell wall formation. In Clostridium beijerinckii (strain ATCC 51743 / NCIMB 8052) (Clostridium acetobutylicum), this protein is UDP-N-acetylmuramate--L-alanine ligase.